A 319-amino-acid polypeptide reads, in one-letter code: Ninja-family protein Os07g0602900 (319 aa).

Disordered stretches follow at residues 1 to 26, 69 to 152, and 181 to 234; these read MAAS…EKGG, LPGG…DAMY, and AEAM…LTMR. The segment covering 70 to 79 has biased composition (gly residues); sequence PGGGGGGAGG. Over residues 105 to 118 the composition is skewed to basic and acidic residues; that stretch reads ERWRRREMQSLKRL. Residues 185–196 are compositionally biased toward polar residues; sequence DTSSSDNASCQN. The span at 225 to 234 shows a compositional bias: low complexity; the sequence is LRTLRSLTMR.

This sequence belongs to the Ninja family.

It is found in the nucleus. The sequence is that of Ninja-family protein Os07g0602900 from Oryza sativa subsp. japonica (Rice).